The primary structure comprises 152 residues: Calmodulin-like protein 2 (152 aa).

EF-hand domains lie at 1-36 (MDRG…VGIM), 37-72 (VPEN…MVEE), 74-109 (EEEE…MGLK), and 112-147 (RTLE…GGFA). Residues aspartate 14, asparagine 16, aspartate 18, lysine 20, glutamate 25, aspartate 50, asparagine 52, aspartate 54, glutamate 61, aspartate 87, asparagine 89, aspartate 91, glutamate 98, aspartate 125, aspartate 127, aspartate 129, methionine 131, and glutamate 136 each contribute to the Ca(2+) site.

The protein belongs to the calmodulin family.

Potential calcium sensor that is required for pollen tube attraction for ovule fertilization. This Arabidopsis thaliana (Mouse-ear cress) protein is Calmodulin-like protein 2 (CML2).